Here is a 294-residue protein sequence, read N- to C-terminus: Nucleotide-binding protein NT01CX_1284 (294 aa).

An ATP-binding site is contributed by 8–15; it reads GLSGAGKS. 59-62 is a GTP binding site; it reads DIRG.

It belongs to the RapZ-like family.

Displays ATPase and GTPase activities. This chain is Nucleotide-binding protein NT01CX_1284, found in Clostridium novyi (strain NT).